A 176-amino-acid polypeptide reads, in one-letter code: Peptide deformylase (176 aa).

Residues Cys97 and His139 each contribute to the Fe cation site. Glu140 is an active-site residue. Residue His143 participates in Fe cation binding.

The protein belongs to the polypeptide deformylase family. Requires Fe(2+) as cofactor.

The catalysed reaction is N-terminal N-formyl-L-methionyl-[peptide] + H2O = N-terminal L-methionyl-[peptide] + formate. Its function is as follows. Removes the formyl group from the N-terminal Met of newly synthesized proteins. Requires at least a dipeptide for an efficient rate of reaction. N-terminal L-methionine is a prerequisite for activity but the enzyme has broad specificity at other positions. The chain is Peptide deformylase from Thermomicrobium roseum (strain ATCC 27502 / DSM 5159 / P-2).